We begin with the raw amino-acid sequence, 78 residues long: Defensin-like protein 149 (78 aa).

The signal sequence occupies residues 1 to 25 (MMKKLIQLSFTVMIIFTILVLGVVA). Cystine bridges form between Cys-36–Cys-77, Cys-45–Cys-65, Cys-50–Cys-71, and Cys-54–Cys-73.

The protein belongs to the DEFL family.

It localises to the secreted. The protein is Defensin-like protein 149 (LCR5) of Arabidopsis thaliana (Mouse-ear cress).